Consider the following 278-residue polypeptide: Small ribosomal subunit protein uS2 (278 aa).

Serine 2 is subject to N-acetylserine. Residues 258–278 (TNEGKTAADEWATGAQTQSNW) form a disordered region.

It belongs to the universal ribosomal protein uS2 family. As to quaternary structure, component of the small ribosomal subunit. Mature ribosomes consist of a small (40S) and a large (60S) subunit. The 40S subunit contains about 33 different proteins and 1 molecule of RNA (18S). The 60S subunit contains about 49 different proteins and 3 molecules of RNA (28S, 5.8S and 5S). Interacts with rps-21.

Its subcellular location is the cytoplasm. Required for the assembly and/or stability of the 40S ribosomal subunit. Required for the processing of the 20S rRNA-precursor to mature 18S rRNA in a late step of the maturation of 40S ribosomal subunits. In Caenorhabditis briggsae, this protein is Small ribosomal subunit protein uS2.